The chain runs to 204 residues: Thymidylate kinase (204 aa).

Residue 11–18 (GIDGAGKS) participates in ATP binding.

Belongs to the thymidylate kinase family.

It carries out the reaction dTMP + ATP = dTDP + ADP. In terms of biological role, phosphorylation of dTMP to form dTDP in both de novo and salvage pathways of dTTP synthesis. This Janthinobacterium sp. (strain Marseille) (Minibacterium massiliensis) protein is Thymidylate kinase.